A 308-amino-acid polypeptide reads, in one-letter code: Spermidine synthase 2 (308 aa).

A PABS domain is found at 17–254; the sequence is PGWFSEISPL…GVIGFMLCST (238 aa). Gln-48 is an S-adenosyl 3-(methylsulfanyl)propylamine binding site. Tyr-78 provides a ligand contact to putrescine. Residues Gln-79, Asp-103, Glu-123, 154-155, and Asp-173 contribute to the S-adenosyl 3-(methylsulfanyl)propylamine site; that span reads DG. Asp-173 (proton acceptor) is an active-site residue. Putrescine is bound by residues 173–176 and Tyr-242; that span reads DSSD.

It belongs to the spermidine/spermine synthase family.

The catalysed reaction is S-adenosyl 3-(methylsulfanyl)propylamine + putrescine = S-methyl-5'-thioadenosine + spermidine + H(+). It functions in the pathway amine and polyamine biosynthesis; spermidine biosynthesis; spermidine from putrescine: step 1/1. The sequence is that of Spermidine synthase 2 from Hyoscyamus niger (Black henbane).